The following is a 420-amino-acid chain: MVSKALLRLVSAVNRRRMKLLLGIALLAYVASVWGNFVNMRSIQENGELKIESKIEEMVEPLREKIRDLEKSFTQKYPPVKFLSEKDRKRILITGGAGFVGSHLTDKLMMDGHEVTVVDNFFTGRKRNVEHWIGHENFELINHDVVEPLYIEVDQIYHLASPASPPNYMYNPIKTLKTNTIGTLNMLGLAKRVGARLLLASTSEVYGDPEVHPQSEDYWGHVNPIGPRACYDEGKRVAETMCYAYMKQEGVEVRVARIFNTFGPRMHMNDGRVVSNFILQALQGEPLTVYGSGSQTRAFQYVSDLVNGLVALMNSNVSSPVNLGNPEEHTILEFAQLIKNLVGSGSEIQFLSEAQDDPQKRKPDIKKAKLMLGWEPVVPLEEGLNKAIHYFRKELEYQANNQYIPKPKPARIKKGRTRHN.

Met-1 bears the N-acetylmethionine mark. Over 1 to 19 the chain is Cytoplasmic; that stretch reads MVSKALLRLVSAVNRRRMK. The helical; Signal-anchor for type II membrane protein transmembrane segment at 20-40 threads the bilayer; the sequence is LLLGIALLAYVASVWGNFVNM. Over 41–420 the chain is Lumenal; the sequence is RSIQENGELK…RIKKGRTRHN (380 aa). Residue Thr-94 is modified to Phosphothreonine. NAD(+) is bound by residues Gly-98, Phe-99, Val-100, Asp-119, Asn-120, Phe-122, Thr-123, Gly-124, Asp-144, and Val-145. Residues Leu-149 and Tyr-150 each coordinate UDP-alpha-D-glucuronate. 2 residues coordinate NAD(+): Leu-159 and Ser-161. Residue Lys-177 participates in UDP-alpha-D-glucuronate binding. NAD(+) is bound at residue Thr-178. UDP-alpha-D-glucuronate is bound by residues Asn-185, Gly-188, Lys-191, and Arg-192. NAD(+)-binding residues include Ala-200, Tyr-231, and Lys-235. The active-site Proton acceptor is the Tyr-231. Residues Tyr-245, Gln-248, and Glu-249 each contribute to the UDP-alpha-D-glucuronate site. Thr-261, His-267, and Arg-272 together coordinate NAD(+). N-linked (GlcNAc...) asparagine glycosylation occurs at Asn-316.

It belongs to the NAD(P)-dependent epimerase/dehydratase family. UDP-glucuronic acid decarboxylase subfamily. Homodimer and homotetramer. Interacts with AKT1. It depends on NAD(+) as a cofactor.

It is found in the golgi apparatus. The protein localises to the golgi stack membrane. It carries out the reaction UDP-alpha-D-glucuronate + H(+) = UDP-alpha-D-xylose + CO2. It functions in the pathway nucleotide-sugar biosynthesis; UDP-alpha-D-xylose biosynthesis; UDP-alpha-D-xylose from UDP-alpha-D-glucuronate: step 1/1. In terms of biological role, catalyzes the NAD-dependent decarboxylation of UDP-glucuronic acid to UDP-xylose. Necessary for the biosynthesis of the core tetrasaccharide in glycosaminoglycan biosynthesis. This chain is UDP-glucuronic acid decarboxylase 1 (UXS1), found in Pongo abelii (Sumatran orangutan).